The sequence spans 287 residues: Chlorophyll a-b binding protein CP29.2, chloroplastic (287 aa).

Residues 1–31 (MAATSTAAAASSIMGTRVVSDISSNSSRFTA) constitute a chloroplast transit peptide. R32 is modified (N2-acetylarginine). T37 bears the Phosphothreonine mark. A chlorophyll b-binding site is contributed by W55. F75 is a chlorophyll a binding site. T109 and T111 each carry phosphothreonine. Chlorophyll a contacts are provided by E137 and H140. The helical transmembrane segment at 143-163 (WAMLATLGAITVEWLTGVTWQ) threads the bilayer. Chlorophyll a is bound at residue L177. Residues 181 to 201 (LPFSISTLIWIEVLVIGYIEF) form a helical membrane-spanning segment. Positions 200 and 203 each coordinate chlorophyll b. Positions 239, 242, 244, 256, and 271 each coordinate chlorophyll a. Residues 245-265 (LAMVGFLGFAVQAAATGKGPL) traverse the membrane as a helical segment.

Belongs to the light-harvesting chlorophyll a/b-binding (LHC) protein family. In terms of assembly, the LHC complex consists of chlorophyll a-b binding proteins. The cofactor is Binds at least 14 chlorophylls (8 Chl-a and 6 Chl-b) and carotenoids such as lutein and neoxanthin.. Post-translationally, photoregulated by reversible phosphorylation of its threonine residues.

The protein localises to the plastid. Its subcellular location is the chloroplast thylakoid membrane. Its function is as follows. The light-harvesting complex (LHC) functions as a light receptor, it captures and delivers excitation energy to photosystems with which it is closely associated. The polypeptide is Chlorophyll a-b binding protein CP29.2, chloroplastic (LHCB4.2) (Arabidopsis thaliana (Mouse-ear cress)).